Reading from the N-terminus, the 527-residue chain is Lysine--tRNA ligase (527 aa).

Residues glutamate 431 and glutamate 438 each contribute to the Mg(2+) site.

This sequence belongs to the class-II aminoacyl-tRNA synthetase family. Homodimer. The cofactor is Mg(2+).

It is found in the cytoplasm. It carries out the reaction tRNA(Lys) + L-lysine + ATP = L-lysyl-tRNA(Lys) + AMP + diphosphate. This Chlamydia pneumoniae (Chlamydophila pneumoniae) protein is Lysine--tRNA ligase (lysS).